The sequence spans 621 residues: Chaperone protein HtpG (621 aa).

An a; substrate-binding region spans residues 1–325; the sequence is MTDASVKETF…SQDLSLNVSR (325 aa). Positions 326–541 are b; the sequence is EMLQSDPKLA…EGDIDVNLER (216 aa). Positions 542–621 are c; the sequence is MLKRHGQLQD…RLGSVMDSAL (80 aa).

Belongs to the heat shock protein 90 family. Homodimer.

Its subcellular location is the cytoplasm. Molecular chaperone. Has ATPase activity. In Roseobacter denitrificans (strain ATCC 33942 / OCh 114) (Erythrobacter sp. (strain OCh 114)), this protein is Chaperone protein HtpG.